A 406-amino-acid chain; its full sequence is Dual-specificity RNA methyltransferase RlmN (406 aa).

E119 serves as the catalytic Proton acceptor. The Radical SAM core domain occupies 125-370 (DKGRGTLCVS…AMVRRTRGDD (246 aa)). An intrachain disulfide couples C132 to C375. [4Fe-4S] cluster is bound by residues C139, C143, and C146. S-adenosyl-L-methionine is bound by residues 192 to 193 (GE), S224, 246 to 248 (SLH), and N332. C375 functions as the S-methylcysteine intermediate in the catalytic mechanism.

Belongs to the radical SAM superfamily. RlmN family. [4Fe-4S] cluster is required as a cofactor.

Its subcellular location is the cytoplasm. It carries out the reaction adenosine(2503) in 23S rRNA + 2 reduced [2Fe-2S]-[ferredoxin] + 2 S-adenosyl-L-methionine = 2-methyladenosine(2503) in 23S rRNA + 5'-deoxyadenosine + L-methionine + 2 oxidized [2Fe-2S]-[ferredoxin] + S-adenosyl-L-homocysteine. The enzyme catalyses adenosine(37) in tRNA + 2 reduced [2Fe-2S]-[ferredoxin] + 2 S-adenosyl-L-methionine = 2-methyladenosine(37) in tRNA + 5'-deoxyadenosine + L-methionine + 2 oxidized [2Fe-2S]-[ferredoxin] + S-adenosyl-L-homocysteine. Functionally, specifically methylates position 2 of adenine 2503 in 23S rRNA and position 2 of adenine 37 in tRNAs. m2A2503 modification seems to play a crucial role in the proofreading step occurring at the peptidyl transferase center and thus would serve to optimize ribosomal fidelity. This Xylella fastidiosa (strain 9a5c) protein is Dual-specificity RNA methyltransferase RlmN.